Consider the following 177-residue polypeptide: R-phycoerythrin beta chain (177 aa).

(2R,3E)-phycoerythrobilin-binding residues include N35 and D39. Residues C50, D54, and C61 each coordinate phycourobilin. Residues N72, 77-78 (RR), C82, and 84-85 (RD) contribute to the (2R,3E)-phycoerythrobilin site. N72 carries the post-translational modification N4-methylasparagine. 147–148 (SG) serves as a coordination point for phycourobilin. C158 lines the (2R,3E)-phycoerythrobilin pocket.

The protein belongs to the phycobiliprotein family. In terms of assembly, heterododecamer of 6 alpha and 6 beta chains. The basic functional unit of phycobiliproteins is a ring-shaped hexamer formed from two back-to-back trimers contacting via the alpha chain subunits. The trimers are composed of alpha/beta subunit heterodimers arranged around a three-fold axis of symmetry. The phycoerythrins also contain a gamma subunit which is located in the center of the hexamer. Post-translationally, contains two covalently linked phycoerythrobilin chromophores and one covalently linked phycourobilin chromophore.

It localises to the plastid. The protein resides in the chloroplast thylakoid membrane. Light-harvesting photosynthetic tetrapyrrole chromophore-protein from the phycobiliprotein complex. This Griffithsia monilis (Red alga) protein is R-phycoerythrin beta chain (cpeB).